The sequence spans 148 residues: Deoxyuridine 5'-triphosphate nucleotidohydrolase (148 aa).

Residues 67 to 69 (RSG), asparagine 80, 84 to 86 (TID), and lysine 94 contribute to the substrate site.

This sequence belongs to the dUTPase family. It depends on Mg(2+) as a cofactor.

It catalyses the reaction dUTP + H2O = dUMP + diphosphate + H(+). It participates in pyrimidine metabolism; dUMP biosynthesis; dUMP from dCTP (dUTP route): step 2/2. Functionally, this enzyme is involved in nucleotide metabolism: it produces dUMP, the immediate precursor of thymidine nucleotides and it decreases the intracellular concentration of dUTP so that uracil cannot be incorporated into DNA. The sequence is that of Deoxyuridine 5'-triphosphate nucleotidohydrolase from Orientia tsutsugamushi (strain Ikeda) (Rickettsia tsutsugamushi).